A 247-amino-acid chain; its full sequence is MSHRDTLFSAPIARLGDWTFDERVAEVFPDMIQRSVPGYSNIISMIGMLAERFVQPGTQVYDLGCSLGAATLSVRRNIHHDNCKIIAIDNSPAMIERCRRHIDAYKAPTPVDVIEGDIRDIAIENASMVVLNFTLQFLEPSERQALLDKIYQGLNPGGALVLSEKFSFEDAKVGELLFNMHHDFKRANGYSELEISQKRSMLENVMLTDSVETHKARLHKAGFEHSELWFQCFNFGSLVALKAEDAA.

S-adenosyl-L-methionine contacts are provided by residues Tyr-39, 64–66 (GCS), 89–90 (DN), 117–118 (DI), Asn-132, and Arg-199.

This sequence belongs to the class I-like SAM-binding methyltransferase superfamily. Cx-SAM synthase family. In terms of assembly, homodimer.

The catalysed reaction is prephenate + S-adenosyl-L-methionine = carboxy-S-adenosyl-L-methionine + 3-phenylpyruvate + H2O. Functionally, catalyzes the conversion of S-adenosyl-L-methionine (SAM) to carboxy-S-adenosyl-L-methionine (Cx-SAM). This chain is Carboxy-S-adenosyl-L-methionine synthase, found in Escherichia coli O139:H28 (strain E24377A / ETEC).